A 492-amino-acid chain; its full sequence is G2/mitotic-specific cyclin CLB2 (492 aa).

Positions 1–176 (MPQVTKTNNE…QPEVGERSQS (176 aa)) are disordered. Over residues 23–33 (QESISTIKNTT) the composition is skewed to polar residues. Residues 34 to 58 (ISNSQHKQQTQQQISSPPQVSVTSS) are compositionally biased toward low complexity. Over residues 59 to 83 (EGVSHVNTRQYLGDVSNQYITNAKP) the composition is skewed to polar residues. The segment covering 111-135 (ASDNNNNGSTSSSSNSSNNNNNDAN) has biased composition (low complexity). A Cyclin N-terminal domain is found at 208-334 (EIFSYYYELE…MLTILNFDLN (127 aa)).

The protein belongs to the cyclin family. Cyclin AB subfamily.

2/mitotic-specific cyclin essential for the control of the cell cycle at the G2/M (mitosis) transition. G2/M cyclins accumulate steadily during G2 and are abruptly destroyed at mitosis. Degradation is necessary for the cell to exit from mitosis. Plays a role in morphogenesis by negatively regulating polarized growth. Through binding to CDC28 regulates cytokinesis, partly by phosphorylation of the actomyosin ring component IQG1. Also involved in the phosphorylation of CDC6 and CDC54. The polypeptide is G2/mitotic-specific cyclin CLB2 (CLB2) (Candida albicans (strain SC5314 / ATCC MYA-2876) (Yeast)).